The chain runs to 443 residues: Exodeoxyribonuclease 7 large subunit (443 aa).

It belongs to the XseA family. As to quaternary structure, heterooligomer composed of large and small subunits.

The protein localises to the cytoplasm. The enzyme catalyses Exonucleolytic cleavage in either 5'- to 3'- or 3'- to 5'-direction to yield nucleoside 5'-phosphates.. In terms of biological role, bidirectionally degrades single-stranded DNA into large acid-insoluble oligonucleotides, which are then degraded further into small acid-soluble oligonucleotides. The sequence is that of Exodeoxyribonuclease 7 large subunit from Legionella pneumophila (strain Paris).